A 375-amino-acid chain; its full sequence is 23S rRNA (uracil(747)-C(5))-methyltransferase RlmC (375 aa).

[4Fe-4S] cluster contacts are provided by cysteine 3, cysteine 11, cysteine 14, and cysteine 87. Glutamine 212, phenylalanine 241, glutamate 262, and asparagine 307 together coordinate S-adenosyl-L-methionine. Cysteine 334 (nucleophile) is an active-site residue.

This sequence belongs to the class I-like SAM-binding methyltransferase superfamily. RNA M5U methyltransferase family. RlmC subfamily.

It catalyses the reaction uridine(747) in 23S rRNA + S-adenosyl-L-methionine = 5-methyluridine(747) in 23S rRNA + S-adenosyl-L-homocysteine + H(+). Catalyzes the formation of 5-methyl-uridine at position 747 (m5U747) in 23S rRNA. In Escherichia coli O139:H28 (strain E24377A / ETEC), this protein is 23S rRNA (uracil(747)-C(5))-methyltransferase RlmC.